We begin with the raw amino-acid sequence, 180 residues long: Large ribosomal subunit protein uL6 (180 aa).

The protein belongs to the universal ribosomal protein uL6 family. Part of the 50S ribosomal subunit.

This protein binds to the 23S rRNA, and is important in its secondary structure. It is located near the subunit interface in the base of the L7/L12 stalk, and near the tRNA binding site of the peptidyltransferase center. The chain is Large ribosomal subunit protein uL6 from Thermodesulfovibrio yellowstonii (strain ATCC 51303 / DSM 11347 / YP87).